A 445-amino-acid chain; its full sequence is Mannan endo-1,4-beta-mannosidase 2 (445 aa).

Positions 1–27 (MAVGNGLILYHILGLASCIALVYFSLG) are cleaved as a signal peptide. Trp110 lines the substrate pocket. N-linked (GlcNAc...) asparagine glycosylation is present at Asn181. Residue Asn226 coordinates substrate. Residue Glu227 is the Proton donor of the active site. Tyr309 is a substrate binding site. The Nucleophile role is filled by Glu349. Trp391 provides a ligand contact to substrate.

This sequence belongs to the glycosyl hydrolase 5 (cellulase A) family. Expressed in stems and seeds, and at lower levels in roots and leaves.

The protein localises to the secreted. The catalysed reaction is Random hydrolysis of (1-&gt;4)-beta-D-mannosidic linkages in mannans, galactomannans and glucomannans.. This is Mannan endo-1,4-beta-mannosidase 2 (MAN2) from Oryza sativa subsp. japonica (Rice).